The chain runs to 399 residues: Serine/threonine-protein kinase PknL (399 aa).

Residues 1-368 (MVEAGTRDPL…FIWARQHARR (368 aa)) are Cytoplasmic-facing. The Protein kinase domain occupies 19–278 (YLVQAKIASG…IAMGADLEAI (260 aa)). ATP-binding positions include 25-33 (IASGGTSTV) and K48. Phosphothreonine; by autocatalysis is present on T32. Position 62 is a phosphothreonine; by autocatalysis (T62). D142 acts as the Proton acceptor in catalysis. 3 positions are modified to phosphothreonine; by autocatalysis: T173, T175, and T323. Residues 312 to 346 (GQLGAKPVHHPTRQLTRQPGDCSEPASGSEPEHEP) form a disordered region. A helical membrane pass occupies residues 369-389 (MVLVWVSVVLAITGLVASAAW). Topologically, residues 390–399 (TIGSNLSGLL) are extracellular.

The protein belongs to the protein kinase superfamily. Ser/Thr protein kinase family. Post-translationally, autophosphorylated. Thr-173 is required for autophosphorylation and transphosphorylation activities. Thr-175 is not necessary for autophosphorylation activity, but is required for full kinase activity.

Its subcellular location is the cell membrane. It carries out the reaction L-seryl-[protein] + ATP = O-phospho-L-seryl-[protein] + ADP + H(+). It catalyses the reaction L-threonyl-[protein] + ATP = O-phospho-L-threonyl-[protein] + ADP + H(+). Its function is as follows. Phosphorylates the DNA-binding protein MT2231. May be involved in the regulation of cell division and cell envelope biosynthesis. The polypeptide is Serine/threonine-protein kinase PknL (pknL) (Mycobacterium tuberculosis (strain CDC 1551 / Oshkosh)).